Reading from the N-terminus, the 1342-residue chain is DNA-directed RNA polymerase subunit beta (1342 aa).

This sequence belongs to the RNA polymerase beta chain family. The RNAP catalytic core consists of 2 alpha, 1 beta, 1 beta' and 1 omega subunit. When a sigma factor is associated with the core the holoenzyme is formed, which can initiate transcription.

The catalysed reaction is RNA(n) + a ribonucleoside 5'-triphosphate = RNA(n+1) + diphosphate. Functionally, DNA-dependent RNA polymerase catalyzes the transcription of DNA into RNA using the four ribonucleoside triphosphates as substrates. The sequence is that of DNA-directed RNA polymerase subunit beta from Enterobacter sp. (strain 638).